The primary structure comprises 293 residues: Kynurenine formamidase (293 aa).

The short motif at 84 to 88 (HGGYW) is the HGGXW element. S153 functions as the Nucleophile in the catalytic mechanism. Active-site residues include D236 and H268.

This sequence belongs to the kynurenine formamidase family. Homodimer.

The protein resides in the cytoplasm. Its subcellular location is the cytosol. It is found in the nucleus. The enzyme catalyses N-formyl-L-kynurenine + H2O = L-kynurenine + formate + H(+). It functions in the pathway amino-acid degradation; L-tryptophan degradation via kynurenine pathway; L-kynurenine from L-tryptophan: step 2/2. Functionally, catalyzes the hydrolysis of N-formyl-L-kynurenine to L-kynurenine, the second step in the kynurenine pathway of tryptophan degradation. Kynurenine may be further oxidized to nicotinic acid, NAD(H) and NADP(H). Required for elimination of toxic metabolites. The polypeptide is Kynurenine formamidase (afmid) (Danio rerio (Zebrafish)).